The following is a 172-amino-acid chain: Small ribosomal subunit protein uS5 (172 aa).

Positions 17–80 constitute an S5 DRBM domain; that stretch reads LREKMISVNR…DEARRKMVKV (64 aa).

It belongs to the universal ribosomal protein uS5 family. In terms of assembly, part of the 30S ribosomal subunit. Contacts proteins S4 and S8.

Functionally, with S4 and S12 plays an important role in translational accuracy. Its function is as follows. Located at the back of the 30S subunit body where it stabilizes the conformation of the head with respect to the body. The polypeptide is Small ribosomal subunit protein uS5 (Cupriavidus pinatubonensis (strain JMP 134 / LMG 1197) (Cupriavidus necator (strain JMP 134))).